We begin with the raw amino-acid sequence, 347 residues long: Phenylalanine--tRNA ligase alpha subunit (347 aa).

Glutamate 265 is a binding site for Mg(2+).

This sequence belongs to the class-II aminoacyl-tRNA synthetase family. Phe-tRNA synthetase alpha subunit type 1 subfamily. Tetramer of two alpha and two beta subunits. Mg(2+) is required as a cofactor.

The protein localises to the cytoplasm. It carries out the reaction tRNA(Phe) + L-phenylalanine + ATP = L-phenylalanyl-tRNA(Phe) + AMP + diphosphate + H(+). The polypeptide is Phenylalanine--tRNA ligase alpha subunit (Mycolicibacterium paratuberculosis (strain ATCC BAA-968 / K-10) (Mycobacterium paratuberculosis)).